The primary structure comprises 351 residues: Tropomodulin-2 (351 aa).

Ser25 carries the post-translational modification Phosphoserine.

The protein belongs to the tropomodulin family. In terms of assembly, binds to the N-terminus of tropomyosin and to actin. Neuronal-tissue specific.

The protein resides in the cytoplasm. It localises to the cytoskeleton. Blocks the elongation and depolymerization of the actin filaments at the pointed end. The Tmod/TM complex contributes to the formation of the short actin protofilament, which in turn defines the geometry of the membrane skeleton. The chain is Tropomodulin-2 (Tmod2) from Mus musculus (Mouse).